The following is a 750-amino-acid chain: Putative tyrosine-protein kinase EpsB (750 aa).

Topologically, residues 1-31 (MTQNLPQPPAVNAPENELDLVRYLDVLVANR) are cytoplasmic. Residues 32-52 (WLIAGIAAAVMLLGAAYAFLA) traverse the membrane as a helical segment. Residues 53–444 (RPVYEADIMV…VPEEPVKPKK (392 aa)) lie on the Periplasmic side of the membrane. Residues 445–465 (LTVTPLAGVLGVVLGVMAAFV) traverse the membrane as a helical segment. At 466–750 (RNALFGGITD…NSKPPEAESA (285 aa)) the chain is on the cytoplasmic side.

The protein belongs to the etk/wzc family.

The protein localises to the cell inner membrane. The catalysed reaction is L-tyrosyl-[protein] + ATP = O-phospho-L-tyrosyl-[protein] + ADP + H(+). Probably involved in polymerization and/or export of exopolysaccharide EPS I which functions as a virulence factor. May be involved in an ATP-dependent process in the pathway for EPS I production, possibly export of the trimeric repeat units across the inner membrane or their polymerization. The sequence is that of Putative tyrosine-protein kinase EpsB (epsB) from Ralstonia solanacearum (Pseudomonas solanacearum).